Consider the following 187-residue polypeptide: UPF0398 protein LBA1157 (187 aa).

The protein belongs to the UPF0398 family.

This Lactobacillus acidophilus (strain ATCC 700396 / NCK56 / N2 / NCFM) protein is UPF0398 protein LBA1157.